Reading from the N-terminus, the 602-residue chain is Pentatricopeptide repeat-containing protein At5g11310, mitochondrial (602 aa).

The N-terminal 35 residues, 1–35 (MNSLFTAFRRNLLLNPNPHRNFFLHRLLSSSRRSS), are a transit peptide targeting the mitochondrion. 11 PPR repeats span residues 134–165 (SPSL…VRSD), 172–202 (SADT…ARSY), 211–241 (ELRL…IGGT), 249–283 (SVRI…NVKP), 284–318 (TVVT…EMEI), 319–353 (NFMV…ESGP), 354–388 (TIVT…GVDP), 389–423 (TTTT…GHSP), 424–458 (DRLT…GIDP), 459–493 (DLLT…GIIP), and 494–528 (QYIT…PHSK).

The protein belongs to the PPR family. P subfamily.

Its subcellular location is the mitochondrion. This is Pentatricopeptide repeat-containing protein At5g11310, mitochondrial from Arabidopsis thaliana (Mouse-ear cress).